The sequence spans 360 residues: Phosphoserine aminotransferase (360 aa).

Residue Arg-42 coordinates L-glutamate. The pyridoxal 5'-phosphate site is built by Trp-102, Thr-152, Asp-171, and Gln-194. An N6-(pyridoxal phosphate)lysine modification is found at Lys-195. Pyridoxal 5'-phosphate is bound at residue 237–238 (NT).

This sequence belongs to the class-V pyridoxal-phosphate-dependent aminotransferase family. SerC subfamily. Homodimer. Pyridoxal 5'-phosphate is required as a cofactor.

The protein localises to the cytoplasm. It carries out the reaction O-phospho-L-serine + 2-oxoglutarate = 3-phosphooxypyruvate + L-glutamate. The enzyme catalyses 4-(phosphooxy)-L-threonine + 2-oxoglutarate = (R)-3-hydroxy-2-oxo-4-phosphooxybutanoate + L-glutamate. It participates in amino-acid biosynthesis; L-serine biosynthesis; L-serine from 3-phospho-D-glycerate: step 2/3. Its pathway is cofactor biosynthesis; pyridoxine 5'-phosphate biosynthesis; pyridoxine 5'-phosphate from D-erythrose 4-phosphate: step 3/5. Catalyzes the reversible conversion of 3-phosphohydroxypyruvate to phosphoserine and of 3-hydroxy-2-oxo-4-phosphonooxybutanoate to phosphohydroxythreonine. The polypeptide is Phosphoserine aminotransferase (Coxiella burnetii (strain RSA 493 / Nine Mile phase I)).